Reading from the N-terminus, the 361-residue chain is Large ribosomal subunit protein mL45 (361 aa).

Residues E319–I361 are disordered.

Belongs to the mitochondrion-specific ribosomal protein mL45 family.

Its subcellular location is the mitochondrion. In Drosophila melanogaster (Fruit fly), this protein is Large ribosomal subunit protein mL45 (mRpL45).